A 161-amino-acid chain; its full sequence is Ribosome maturation factor RimP (161 aa).

It belongs to the RimP family.

It localises to the cytoplasm. Its function is as follows. Required for maturation of 30S ribosomal subunits. This is Ribosome maturation factor RimP from Rickettsia conorii (strain ATCC VR-613 / Malish 7).